Consider the following 319-residue polypeptide: ATP-dependent 6-phosphofructokinase (319 aa).

An ATP-binding site is contributed by Gly-11. 21-25 (RAVVR) serves as a coordination point for ADP. ATP-binding positions include 72 to 73 (RC) and 102 to 105 (GEGS). Residue Glu-103 participates in Mg(2+) binding. 126–128 (TID) contributes to the substrate binding site. Asp-128 acts as the Proton acceptor in catalysis. Lys-155 lines the ADP pocket. Residues Arg-163 and 170–172 (MGR) each bind substrate. Residues 186–188 (GAE), Arg-212, and 214–216 (KIN) each bind ADP. Substrate contacts are provided by residues Glu-223, Arg-244, and 250–253 (HVQR).

This sequence belongs to the phosphofructokinase type A (PFKA) family. ATP-dependent PFK group I subfamily. Prokaryotic clade 'B1' sub-subfamily. In terms of assembly, homotetramer. It depends on Mg(2+) as a cofactor.

The protein resides in the cytoplasm. It catalyses the reaction beta-D-fructose 6-phosphate + ATP = beta-D-fructose 1,6-bisphosphate + ADP + H(+). It participates in carbohydrate degradation; glycolysis; D-glyceraldehyde 3-phosphate and glycerone phosphate from D-glucose: step 3/4. Its activity is regulated as follows. Allosterically activated by ADP and other diphosphonucleosides, and allosterically inhibited by phosphoenolpyruvate. In terms of biological role, catalyzes the phosphorylation of D-fructose 6-phosphate to fructose 1,6-bisphosphate by ATP, the first committing step of glycolysis. The polypeptide is ATP-dependent 6-phosphofructokinase (Thermotoga petrophila (strain ATCC BAA-488 / DSM 13995 / JCM 10881 / RKU-1)).